The sequence spans 396 residues: MAKEKFERNKPHVNIGTIGHVDHGKTSLTAAITKVLAKTGGATFLAYDQIDKAPEERERGITISTAHVEYQTKNRHYAHVDCPGHADYVKNMITGAAQMDGAILVVSAADGPMPQTREHILLARQVGVPYIVVFLNKVDMLDDPELRELVEMEVRDLLKKYEFPGDSIPIIPGSALKALEGDTSDIGEGAILKLMAAVDEYIPTPQRATDKPFLMPVEDVFSIAGRGTVATGRVERGKIKVGEEVEIVGIRPTQKTVITGVEMFRKLLDEGMAGDNIGALLRGLKREDLERGQVLANWGSINPHTKFKAQVYVLSKEEGGRHTPFFKGYRPQFYFRTTDVTGTVKLPDNVEMVMPGDNIAIEVELITPVAMEKELPFAIREGGRTVGAGVVADIIA.

The tr-type G domain occupies 10–206 (KPHVNIGTIG…AVDEYIPTPQ (197 aa)). Residues 19-26 (GHVDHGKT) are G1. 19–26 (GHVDHGKT) provides a ligand contact to GTP. Threonine 26 contacts Mg(2+). A G2 region spans residues 60–64 (GITIS). The segment at 81 to 84 (DCPG) is G3. Residues 81–85 (DCPGH) and 136–139 (NKVD) each bind GTP. The interval 136-139 (NKVD) is G4. Positions 174–176 (SAL) are G5.

This sequence belongs to the TRAFAC class translation factor GTPase superfamily. Classic translation factor GTPase family. EF-Tu/EF-1A subfamily. As to quaternary structure, monomer.

Its subcellular location is the cytoplasm. The enzyme catalyses GTP + H2O = GDP + phosphate + H(+). In terms of biological role, GTP hydrolase that promotes the GTP-dependent binding of aminoacyl-tRNA to the A-site of ribosomes during protein biosynthesis. The chain is Elongation factor Tu from Stigmatella aurantiaca.